The primary structure comprises 651 residues: L-aspartate oxidase, chloroplastic (651 aa).

Residues 1-74 (MAAHVSTGNI…PISETSKPIR (74 aa)) constitute a chloroplast transit peptide. Residues 92 to 95 (SGVA), lysine 114, 121 to 128 (NTNYAQGG), and aspartate 292 each bind FAD. The active-site Proton donor/acceptor is the arginine 368. Residues glutamate 453 and 469-470 (SL) each bind FAD.

Belongs to the FAD-dependent oxidoreductase 2 family. NadB subfamily. As to quaternary structure, interacts in vitro with QS. Requires FAD as cofactor.

The protein localises to the plastid. The protein resides in the chloroplast. It catalyses the reaction L-aspartate + O2 = iminosuccinate + H2O2. The protein operates within cofactor biosynthesis; NAD(+) biosynthesis; iminoaspartate from L-aspartate (oxidase route): step 1/1. In terms of biological role, catalyzes the oxidation of L-aspartate to iminoaspartate. Can complement nadB-deficient E.coli mutant. Plays a role in stomatal immunity. This Arabidopsis thaliana (Mouse-ear cress) protein is L-aspartate oxidase, chloroplastic.